Reading from the N-terminus, the 196-residue chain is SERTA domain-containing protein 3 (196 aa).

Residues 1–21 are disordered; that stretch reads MVGGLKRKHSDLEEEEERWEW. The SERTA domain maps to 26 to 73; sequence LQSYQQALLRISLDKVQRSLGPRAPSLRRHVLIHNTLQQLQAALRLAP. A disordered region spans residues 104-125; the sequence is TSMDGTEPPQNPVTPLGLQNEV.

Interacts with RPA2. In terms of assembly, (Microbial infection) Interacts with influenza virus PA, PB1 and PB2,leading to inhibition of RdRp complex assembly. As to quaternary structure, (Microbial infection) Interacts with zika virus capsid protein.

Its subcellular location is the nucleus. Antiviral interferon-stimulated protein that plays a role in innate immunity and in the suppression of viruses through different mechanisms. Plays a role in the late phase response of TLR-induced immune effector expression. During influenza infection, interacts with PB2, PB1, and PA to disrupt the formation of the viral RdRp complex. Inhibits zika virus by interacting with the capsid protein in the nucleolus and reducing its abundance through proteasomal degradation. Strong transcriptional coactivator. In Homo sapiens (Human), this protein is SERTA domain-containing protein 3 (SERTAD3).